We begin with the raw amino-acid sequence, 470 residues long: Type II NADH:quinone oxidoreductase NdhA (470 aa).

FAD contacts are provided by residues 21–25 and Val-89; that span reads GSGFG. Residue Glu-184 is part of the active site. Residues Asp-323 and 334-335 contribute to the FAD site; that span reads AQ. The chain crosses the membrane as a helical span at residues 389-409; it reads FAGYFAWLAWLVLHLVYLVGY.

The protein belongs to the NADH dehydrogenase family. The cofactor is FAD.

Its subcellular location is the cell inner membrane. It carries out the reaction a quinone + NADH + H(+) = a quinol + NAD(+). The enzyme catalyses a menaquinone + NADH + H(+) = a menaquinol + NAD(+). Inhibited by phenothiazine analogs. Alternative, nonproton pumping NADH:quinone oxidoreductase that delivers electrons to the respiratory chain by oxidation of NADH and reduction of quinones. The protein is Type II NADH:quinone oxidoreductase NdhA of Mycobacterium tuberculosis (strain ATCC 25618 / H37Rv).